The following is a 423-amino-acid chain: Serine--tRNA ligase (423 aa).

Residue 229–231 (TAE) participates in L-serine binding. 260 to 262 (RKE) serves as a coordination point for ATP. Position 283 (Glu-283) interacts with L-serine. Residue 347–350 (EVSS) coordinates ATP. Ser-383 lines the L-serine pocket.

Belongs to the class-II aminoacyl-tRNA synthetase family. Type-1 seryl-tRNA synthetase subfamily. Homodimer. The tRNA molecule binds across the dimer.

The protein localises to the cytoplasm. It catalyses the reaction tRNA(Ser) + L-serine + ATP = L-seryl-tRNA(Ser) + AMP + diphosphate + H(+). The catalysed reaction is tRNA(Sec) + L-serine + ATP = L-seryl-tRNA(Sec) + AMP + diphosphate + H(+). It functions in the pathway aminoacyl-tRNA biosynthesis; selenocysteinyl-tRNA(Sec) biosynthesis; L-seryl-tRNA(Sec) from L-serine and tRNA(Sec): step 1/1. Functionally, catalyzes the attachment of serine to tRNA(Ser). Is also able to aminoacylate tRNA(Sec) with serine, to form the misacylated tRNA L-seryl-tRNA(Sec), which will be further converted into selenocysteinyl-tRNA(Sec). This Chloroflexus aurantiacus (strain ATCC 29366 / DSM 635 / J-10-fl) protein is Serine--tRNA ligase.